Consider the following 202-residue polypeptide: Na(+)-translocating NADH-quinone reductase subunit E (202 aa).

A run of 6 helical transmembrane segments spans residues 11 to 31, 35 to 55, 81 to 101, 114 to 134, 144 to 164, and 180 to 200; these read SVFI…FIAV, IETA…TVPA, FIAL…LEMV, GIFL…LFMI, VVYG…MAGV, and LGIT…FSGI.

This sequence belongs to the NqrDE/RnfAE family. As to quaternary structure, composed of six subunits; NqrA, NqrB, NqrC, NqrD, NqrE and NqrF.

Its subcellular location is the cell inner membrane. It carries out the reaction a ubiquinone + n Na(+)(in) + NADH + H(+) = a ubiquinol + n Na(+)(out) + NAD(+). Functionally, NQR complex catalyzes the reduction of ubiquinone-1 to ubiquinol by two successive reactions, coupled with the transport of Na(+) ions from the cytoplasm to the periplasm. NqrA to NqrE are probably involved in the second step, the conversion of ubisemiquinone to ubiquinol. This chain is Na(+)-translocating NADH-quinone reductase subunit E, found in Methylococcus capsulatus (strain ATCC 33009 / NCIMB 11132 / Bath).